A 258-amino-acid polypeptide reads, in one-letter code: Regulatory protein RecX (258 aa).

The protein belongs to the RecX family.

The protein localises to the cytoplasm. Its function is as follows. Modulates RecA activity. The chain is Regulatory protein RecX from Streptococcus pyogenes serotype M2 (strain MGAS10270).